The sequence spans 458 residues: Periphilin-1 (458 aa).

Composition is skewed to basic and acidic residues over residues 1-18 (MWSE…ERAP) and 63-107 (EGRS…DGFR). 2 disordered regions span residues 1 to 51 (MWSE…SYNR) and 63 to 284 (EGRS…LFED). The Nuclear localization signal motif lies at 103 to 109 (RDGFRRK). Residue K109 forms a Glycyl lysine isopeptide (Lys-Gly) (interchain with G-Cter in SUMO2) linkage. S110, S114, S133, and S140 each carry phosphoserine. Residues 116–142 (YARERSPYKRDNTFFRESPVGRKDSPH) are compositionally biased toward basic and acidic residues. Over residues 143 to 154 (SRSGSSVSSRSY) the composition is skewed to low complexity. Residue K160 forms a Glycyl lysine isopeptide (Lys-Gly) (interchain with G-Cter in SUMO2) linkage. 2 positions are modified to phosphoserine: S161 and S167. K180 participates in a covalent cross-link: Glycyl lysine isopeptide (Lys-Gly) (interchain with G-Cter in SUMO2). Residues 181–194 (RQNEGNPERDKERP) show a composition bias toward basic and acidic residues. S197 carries the post-translational modification Phosphoserine. Residue K199 forms a Glycyl lysine isopeptide (Lys-Gly) (interchain with G-Cter in SUMO2) linkage. Phosphoserine occurs at positions 201 and 205. The segment covering 205-215 (SPSSGSAVSSS) has biased composition (low complexity). A compositionally biased stretch (basic and acidic residues) spans 217–230 (VLDKPSRLTEKELA). K227 is covalently cross-linked (Glycyl lysine isopeptide (Lys-Gly) (interchain with G-Cter in SUMO2)). K235 and K240 each carry N6-acetyllysine; alternate. Residues K235 and K240 each participate in a glycyl lysine isopeptide (Lys-Gly) (interchain with G-Cter in SUMO2); alternate cross-link. Residues 237 to 246 (AAEKLEKSDE) show a composition bias toward basic and acidic residues. Residue S325 is modified to Phosphoserine. K328 is covalently cross-linked (Glycyl lysine isopeptide (Lys-Gly) (interchain with G-Cter in SUMO2)). A disordered region spans residues 345-406 (GQTWQQVPPV…TQLRRTTGAP (62 aa)). Positions 377 to 386 (PQPPQAPQPL) are enriched in pro residues. Residues 388-398 (PRKKRVRRTTQ) are compositionally biased toward basic residues. A Glycyl lysine isopeptide (Lys-Gly) (interchain with G-Cter in SUMO2) cross-link involves residue K453.

As to quaternary structure, homodimer. Component of the HUSH complex; at least composed of TASOR, PPHLN1 and MPHOSPH8. Interacts with SIN3A and HDAC1. May interact with PPL. Post-translationally, substrate of transglutaminase (in vitro). In terms of tissue distribution, ubiquitous.

The protein localises to the nucleus. The protein resides in the cytoplasm. It is found in the chromosome. Its function is as follows. Component of the HUSH complex, a multiprotein complex that mediates epigenetic repression. The HUSH complex is recruited to genomic loci rich in H3K9me3 and is probably required to maintain transcriptional silencing by promoting recruitment of SETDB1, a histone methyltransferase that mediates further deposition of H3K9me3. In the HUSH complex, contributes to the maintenance of the complex at chromatin. Acts as a transcriptional corepressor and regulates the cell cycle, probably via the HUSH complex. The HUSH complex is also involved in the silencing of unintegrated retroviral DNA: some part of the retroviral DNA formed immediately after infection remains unintegrated in the host genome and is transcriptionally repressed. May be involved in epithelial differentiation by contributing to epidermal integrity and barrier formation. This Homo sapiens (Human) protein is Periphilin-1.